The primary structure comprises 288 residues: Polyamine aminopropyltransferase (288 aa).

A PABS domain is found at Glu-9–Asp-238. Residue Gln-33 participates in S-methyl-5'-thioadenosine binding. Spermidine is bound by residues His-64 and Asp-88. Residues Glu-108 and Asp-140–Gly-141 each bind S-methyl-5'-thioadenosine. Catalysis depends on Asp-158, which acts as the Proton acceptor. Asp-158 to Asp-161 contributes to the spermidine binding site. Position 165 (Pro-165) interacts with S-methyl-5'-thioadenosine.

It belongs to the spermidine/spermine synthase family. Homodimer or homotetramer.

The protein resides in the cytoplasm. The catalysed reaction is S-adenosyl 3-(methylsulfanyl)propylamine + putrescine = S-methyl-5'-thioadenosine + spermidine + H(+). Its pathway is amine and polyamine biosynthesis; spermidine biosynthesis; spermidine from putrescine: step 1/1. Functionally, catalyzes the irreversible transfer of a propylamine group from the amino donor S-adenosylmethioninamine (decarboxy-AdoMet) to putrescine (1,4-diaminobutane) to yield spermidine. The sequence is that of Polyamine aminopropyltransferase from Shigella flexneri serotype 5b (strain 8401).